The sequence spans 104 residues: uncharacterized protein (104 aa).

A coiled-coil region spans residues 42–104 (ARDSFDQDFE…AREERHKLGR (63 aa)).

Belongs to the WXG100 family.

This is an uncharacterized protein from Bacillus subtilis (strain 168).